The chain runs to 364 residues: UDP-arabinopyranose mutase 1 (364 aa).

Positions 110–112 (DDD) match the DXD motif motif. An N-linked (Glc...) arginine glycan is attached at Arg-158.

It belongs to the RGP family. As to quaternary structure, heteromers with UAM2 and UAM3. The cofactor is Mn(2+). Mg(2+) serves as cofactor. Reversibly glycosylated in vitro at Arg-158 by UDP-glucose. Reversibly glycosylated by UDP-xylose and UDP-galactose.

Its subcellular location is the golgi apparatus. The enzyme catalyses UDP-beta-L-arabinofuranose = UDP-beta-L-arabinopyranose. Functionally, UDP-L-arabinose mutase involved in the biosynthesis of cell wall non-cellulosic polysaccharides. Catalyzes the interconvertion of UDP-L-arabinopyranose (UDP-Arap) and UDP-L-arabinofuranose (UDP-Araf). Preferentially catalyzes the formation of UDP-Arap from UDP-Araf. At thermodynamic equilibrium in vitro the ratio of the pyranose form over the furanose form is 90:10. Is probably active as heteromer in vivo. The sequence is that of UDP-arabinopyranose mutase 1 from Oryza sativa subsp. japonica (Rice).